Here is a 62-residue protein sequence, read N- to C-terminus: Large ribosomal subunit protein bL28 (62 aa).

The tract at residues 1 to 27 (MAKECVITGRKSRSGNKRSHAMNSSKR) is disordered. A compositionally biased stretch (basic residues) spans 10-20 (RKSRSGNKRSH).

This sequence belongs to the bacterial ribosomal protein bL28 family.

This Listeria innocua serovar 6a (strain ATCC BAA-680 / CLIP 11262) protein is Large ribosomal subunit protein bL28.